Consider the following 387-residue polypeptide: Apoptosis-inducing factor homolog B (387 aa).

FAD contacts are provided by residues 12–16 (GGGYG), arginine 47, and aspartate 292.

It belongs to the FAD-dependent oxidoreductase family. The cofactor is FAD.

In terms of biological role, putative FAD-dependent oxidoreductase. This is Apoptosis-inducing factor homolog B (aifB) from Dictyostelium discoideum (Social amoeba).